We begin with the raw amino-acid sequence, 200 residues long: Guanylate kinase (200 aa).

The 179-residue stretch at 6 to 184 (GLLIVLSGPS…AVDKLKSILL (179 aa)) folds into the Guanylate kinase-like domain. 13-20 (GPSGAGKG) provides a ligand contact to ATP.

The protein belongs to the guanylate kinase family.

Its subcellular location is the cytoplasm. The catalysed reaction is GMP + ATP = GDP + ADP. Functionally, essential for recycling GMP and indirectly, cGMP. This is Guanylate kinase from Desulfitobacterium hafniense (strain Y51).